The primary structure comprises 237 residues: Large ribosomal subunit protein uL22m (237 aa).

The protein belongs to the universal ribosomal protein uL22 family.

It localises to the mitochondrion. In Dictyostelium discoideum (Social amoeba), this protein is Large ribosomal subunit protein uL22m (mrpl22).